The following is a 358-amino-acid chain: uncharacterized protein (358 aa).

The region spanning 229–264 (KQLHEFKLAFDYFDQEKNGWLDYEHFELCLKSQGYN) is the EF-hand domain. Positions 242, 246, 248, and 253 each coordinate Ca(2+).

This is an uncharacterized protein from Caenorhabditis elegans.